We begin with the raw amino-acid sequence, 212 residues long: Fibrillarin-like rRNA/tRNA 2'-O-methyltransferase (212 aa).

S-adenosyl-L-methionine contacts are provided by residues 76 to 77, 94 to 95, 119 to 120, and 139 to 142; these read TT, EL, DA, and DIAQ.

The protein belongs to the methyltransferase superfamily. Fibrillarin family. As to quaternary structure, interacts with nop5. Component of box C/D small ribonucleoprotein (sRNP) particles that contain rpl7ae, FlpA and nop5, plus a guide RNA.

Its function is as follows. Involved in pre-rRNA and tRNA processing. Utilizes the methyl donor S-adenosyl-L-methionine to catalyze the site-specific 2'-hydroxyl methylation of ribose moieties in rRNA and tRNA. Site specificity is provided by a guide RNA that base pairs with the substrate. Methylation occurs at a characteristic distance from the sequence involved in base pairing with the guide RNA. The sequence is that of Fibrillarin-like rRNA/tRNA 2'-O-methyltransferase from Picrophilus torridus (strain ATCC 700027 / DSM 9790 / JCM 10055 / NBRC 100828 / KAW 2/3).